A 391-amino-acid chain; its full sequence is MSEDFYDVLGVSRDATEDEIMQAYRDQVSEYHPDVSDDPDAEEKFKKIQKAKDVLTDEETRQQYDQLGHERFEEAEKRGATGNGGGGAGGMGGAGGPFGGGMGGGAGGGMGDIFEQFFGGAGGGGGRGRSGPEQGRDLRTDLTVTLSEAYRGVSKQVTVRRPESCADCGGSGYPEDADVRTCPQCDGQGVVTQVRQTPLGRVQQRQECSRCGGEGELHSETCSTCGGQGQTRERATLTVDIPEGIRTGQTLRMDGEGAPGEPGAPNGDLLVDVTVEEHPDFERDGDDLHHRHAVSFPQAVFGAEIEVPTLDGAATFDLDAGTQSGETFRLKGKGMPRLRRRGNGDLYVTVQVVTPESLSDEQRDALEQFAEAGGEEIDVEQGFFEKLKNSF.

Residues 4 to 68 (DFYDVLGVSR…ETRQQYDQLG (65 aa)) form the J domain. Residues 53–79 (DVLTDEETRQQYDQLGHERFEEAEKRG) are compositionally biased toward basic and acidic residues. 2 disordered regions span residues 53–94 (DVLT…MGGA) and 117–136 (FFGG…EQGR). Gly residues-rich tracts occupy residues 81 to 94 (TGNG…MGGA) and 119 to 129 (GGAGGGGGRGR). The segment at 152–234 (GVSKQVTVRR…CGGQGQTRER (83 aa)) adopts a CR-type zinc-finger fold. Zn(2+)-binding residues include cysteine 165, cysteine 168, cysteine 182, cysteine 185, cysteine 208, cysteine 211, cysteine 222, and cysteine 225. 4 CXXCXGXG motif repeats span residues 165 to 172 (CADCGGSG), 182 to 189 (CPQCDGQG), 208 to 215 (CSRCGGEG), and 222 to 229 (CSTCGGQG).

It belongs to the DnaJ family. As to quaternary structure, homodimer. It depends on Zn(2+) as a cofactor.

The protein localises to the cytoplasm. Participates actively in the response to hyperosmotic and heat shock by preventing the aggregation of stress-denatured proteins and by disaggregating proteins, also in an autonomous, DnaK-independent fashion. Unfolded proteins bind initially to DnaJ; upon interaction with the DnaJ-bound protein, DnaK hydrolyzes its bound ATP, resulting in the formation of a stable complex. GrpE releases ADP from DnaK; ATP binding to DnaK triggers the release of the substrate protein, thus completing the reaction cycle. Several rounds of ATP-dependent interactions between DnaJ, DnaK and GrpE are required for fully efficient folding. Also involved, together with DnaK and GrpE, in the DNA replication of plasmids through activation of initiation proteins. The polypeptide is Chaperone protein DnaJ (Halobacterium salinarum (strain ATCC 29341 / DSM 671 / R1)).